The chain runs to 62 residues: Beta-defensin 33 (62 aa).

The first 20 residues, 1–20 (MRLLFLLFILLVCLAQTTSG), serve as a signal peptide directing secretion. Intrachain disulfides connect Cys-30-Cys-59, Cys-37-Cys-52, and Cys-45-Cys-60.

This sequence belongs to the beta-defensin family.

It localises to the secreted. In terms of biological role, has antibacterial activity. This Mus musculus (Mouse) protein is Beta-defensin 33 (Defb33).